The following is an 89-amino-acid chain: Conotoxin Lt6.4 (89 aa).

Residues 1–22 form the signal peptide; that stretch reads MKLTCVPIVAMLFLMACQLITA. Positions 23-50 are excised as a propeptide; it reads DYSREKHGYSAEKSSDKIQDSFYSKLTK. Intrachain disulfides connect Cys52/Cys67, Cys59/Cys71, and Cys66/Cys80.

This sequence belongs to the conotoxin O1 superfamily. In terms of tissue distribution, expressed by the venom duct.

It localises to the secreted. This chain is Conotoxin Lt6.4, found in Conus litteratus (Lettered cone).